Consider the following 774-residue polypeptide: Beta-xylosidase/alpha-L-arabinofuranosidase 2 (774 aa).

The N-terminal stretch at 1 to 33 (MASVENRTPNVSVFLCFFVLFATLLLSGGRVSS) is a signal peptide. An N-linked (GlcNAc...) asparagine glycan is attached at Asn-136. Residue Asp-303 is part of the active site. Asn-437 is a glycosylation site (N-linked (GlcNAc...) asparagine).

Belongs to the glycoside hydrolase 3 family.

The protein localises to the secreted. It localises to the extracellular space. It is found in the extracellular matrix. It catalyses the reaction Hydrolysis of (1-&gt;4)-beta-D-xylans, to remove successive D-xylose residues from the non-reducing termini.. The catalysed reaction is Hydrolysis of terminal non-reducing alpha-L-arabinofuranoside residues in alpha-L-arabinosides.. A bifunctional beta-xylosidase/alpha-L-arabinosidase, exo-enzyme that acts synergistically with endohydrolases. Releases xylose and arabinose from cell walls. This is Beta-xylosidase/alpha-L-arabinofuranosidase 2 from Medicago sativa subsp. varia (Alfalfa).